The following is a 457-amino-acid chain: Aromatic amino acid transport protein AroP (457 aa).

Residues 1 to 19 (MMEGQQHGEQLKRGLKNRH) are Cytoplasmic-facing. Residues 20 to 40 (IQLIALGGAIGTGLFLGSASV) form a helical membrane-spanning segment. The Periplasmic portion of the chain corresponds to 41 to 42 (IQ). A helical membrane pass occupies residues 43–63 (SAGPGIILGYAIAGFIAFLIM). The Cytoplasmic segment spans residues 64–86 (RQLGEMVVEEPVAGSFSHFAYKY). The helical transmembrane segment at 87–107 (WGSFAGFASGWNYWVLYVLVA) threads the bilayer. The Periplasmic segment spans residues 108-117 (MAELTAVGKY). Residues 118-138 (IQFWYPEIPTWVSAAVFFVVI) form a helical membrane-spanning segment. Topologically, residues 139–155 (NAINLTNVTVFGEMEFW) are cytoplasmic. Residues 156–176 (FAIIKVIAVVAMIIFGGWLLF) form a helical membrane-spanning segment. Over 177–201 (SGNGGPQASVSNLWDQGGFLPHGFT) the chain is Periplasmic. The helical transmembrane segment at 202-222 (GLVMMMAIIMFSFGGLELVGI) threads the bilayer. The Cytoplasmic segment spans residues 223-240 (TAAEADNPEQSIPKATNQ). A helical membrane pass occupies residues 241–261 (VIYRILIFYIGSLAVLLSLMP). Residues 262–271 (WTRVTADTSP) are Periplasmic-facing. The helical transmembrane segment at 272 to 292 (FVLIFHELGDTFVANALNIVV) threads the bilayer. At 293 to 333 (LTAALSVYNSCVYCNSRMLFGLAQQGNAPKALASVDKRGVP) the chain is on the cytoplasmic side. Residues 334-354 (VNTILVSALVTALCVLINYLA) traverse the membrane as a helical segment. The Periplasmic portion of the chain corresponds to 355 to 358 (PESA). The helical transmembrane segment at 359 to 379 (FGLLMALVVSALVINWAMISL) threads the bilayer. Topologically, residues 380-407 (AHMKFRRAKQEQGVVTRFPALLYPLGNW) are cytoplasmic. The helical transmembrane segment at 408 to 428 (ICLLFMAVVLVIMLMTPGMAI) threads the bilayer. A topological domain (periplasmic) is located at residue Ser-429. The helical transmembrane segment at 430-450 (VYLIPVWLVVLGIGYLFKEKT) threads the bilayer. Residues 451 to 457 (AKAVKAH) are Cytoplasmic-facing.

The protein belongs to the amino acid-polyamine-organocation (APC) superfamily. Amino acid transporter (AAT) (TC 2.A.3.1) family.

It is found in the cell inner membrane. It carries out the reaction L-phenylalanine(in) + H(+)(in) = L-phenylalanine(out) + H(+)(out). It catalyses the reaction L-tryptophan(in) + H(+)(in) = L-tryptophan(out) + H(+)(out). The catalysed reaction is L-tyrosine(in) + H(+)(in) = L-tyrosine(out) + H(+)(out). In terms of biological role, permease that is involved in the active transport across the cytoplasmic membrane of all three aromatic amino acids, phenylalanine, tyrosine and tryptophan. The protein is Aromatic amino acid transport protein AroP (aroP) of Escherichia coli O157:H7.